Consider the following 279-residue polypeptide: 4-hydroxy-3-methylbut-2-enyl diphosphate reductase (279 aa).

Cys12 contributes to the [4Fe-4S] cluster binding site. Positions 41 and 74 each coordinate (2E)-4-hydroxy-3-methylbut-2-enyl diphosphate. Dimethylallyl diphosphate-binding residues include His41 and His74. Isopentenyl diphosphate contacts are provided by His41 and His74. Position 96 (Cys96) interacts with [4Fe-4S] cluster. His124 provides a ligand contact to (2E)-4-hydroxy-3-methylbut-2-enyl diphosphate. Residue His124 coordinates dimethylallyl diphosphate. His124 serves as a coordination point for isopentenyl diphosphate. Residue Glu126 is the Proton donor of the active site. Thr164 lines the (2E)-4-hydroxy-3-methylbut-2-enyl diphosphate pocket. Cys192 contacts [4Fe-4S] cluster. Residues Ser220, Ser221, Asn222, and Ser263 each coordinate (2E)-4-hydroxy-3-methylbut-2-enyl diphosphate. Positions 220, 221, 222, and 263 each coordinate dimethylallyl diphosphate. 4 residues coordinate isopentenyl diphosphate: Ser220, Ser221, Asn222, and Ser263.

Belongs to the IspH family. Requires [4Fe-4S] cluster as cofactor.

It catalyses the reaction isopentenyl diphosphate + 2 oxidized [2Fe-2S]-[ferredoxin] + H2O = (2E)-4-hydroxy-3-methylbut-2-enyl diphosphate + 2 reduced [2Fe-2S]-[ferredoxin] + 2 H(+). It carries out the reaction dimethylallyl diphosphate + 2 oxidized [2Fe-2S]-[ferredoxin] + H2O = (2E)-4-hydroxy-3-methylbut-2-enyl diphosphate + 2 reduced [2Fe-2S]-[ferredoxin] + 2 H(+). It participates in isoprenoid biosynthesis; dimethylallyl diphosphate biosynthesis; dimethylallyl diphosphate from (2E)-4-hydroxy-3-methylbutenyl diphosphate: step 1/1. It functions in the pathway isoprenoid biosynthesis; isopentenyl diphosphate biosynthesis via DXP pathway; isopentenyl diphosphate from 1-deoxy-D-xylulose 5-phosphate: step 6/6. Its function is as follows. Catalyzes the conversion of 1-hydroxy-2-methyl-2-(E)-butenyl 4-diphosphate (HMBPP) into a mixture of isopentenyl diphosphate (IPP) and dimethylallyl diphosphate (DMAPP). Acts in the terminal step of the DOXP/MEP pathway for isoprenoid precursor biosynthesis. This is 4-hydroxy-3-methylbut-2-enyl diphosphate reductase from Clostridioides difficile (strain 630) (Peptoclostridium difficile).